Here is a 292-residue protein sequence, read N- to C-terminus: Undecaprenyl-diphosphatase (292 aa).

7 helical membrane passes run 1 to 21, 46 to 66, 88 to 108, 114 to 134, 192 to 212, 225 to 245, and 253 to 273; these read MSLV…FLPV, FVTI…RADI, ARLG…GKLL, ALGN…LLAA, FLLS…STVP, VVGT…LLAW, and VFVV…LSGV.

This sequence belongs to the UppP family.

Its subcellular location is the cell inner membrane. The enzyme catalyses di-trans,octa-cis-undecaprenyl diphosphate + H2O = di-trans,octa-cis-undecaprenyl phosphate + phosphate + H(+). Its function is as follows. Catalyzes the dephosphorylation of undecaprenyl diphosphate (UPP). Confers resistance to bacitracin. In Anaeromyxobacter dehalogenans (strain 2CP-C), this protein is Undecaprenyl-diphosphatase.